We begin with the raw amino-acid sequence, 1477 residues long: FHA domain-containing protein PS1 (1477 aa).

In terms of domain architecture, FHA spans 64–115; it reads LVVGRHPDCDILLTHPSISRFHLEIRSISSRQKLFVTDLSSVHGTWVRDLRI. Disordered stretches follow at residues 188-218, 588-644, 789-818, 832-911, 942-979, 1004-1030, and 1159-1225; these read ENTT…DEDT, LGKA…PKSF, PNSF…DSEF, LNQK…LIGS, ALAA…RDDV, IRTN…KQAL, and VEQE…IRSS. The segment covering 589 to 607 has biased composition (basic and acidic residues); sequence GKADIRSHEENGESEDSRQ. The span at 832 to 849 shows a compositional bias: polar residues; that stretch reads LNQKRNGETKVSSRQASP. The span at 870 to 883 shows a compositional bias: low complexity; that stretch reads QSLCSSSQPPSESE. Composition is skewed to polar residues over residues 885–897, 957–971, 1007–1018, and 1198–1212; these read NPAT…SGII, LSSS…QTPE, NKSQGKQKQTGR, and SSFQ…SSTA. Residues 1213 to 1225 show a composition bias toward low complexity; the sequence is SARNNISRGIRSS.

Functionally, required for normal spindle orientation at male meiosis II and normal formation of tetrad of microspores. Not involved in female meiosis. This is FHA domain-containing protein PS1 from Arabidopsis thaliana (Mouse-ear cress).